Consider the following 135-residue polypeptide: Probable disulfide formation protein (135 aa).

A helical membrane pass occupies residues serine 7–tyrosine 26. Cysteine 36 and cysteine 39 are joined by a disulfide. Helical transmembrane passes span tyrosine 41–glutamate 60 and tyrosine 67–cysteine 84. A disulfide bond links cysteine 96 and cysteine 101. Residues glycine 109 to alanine 131 form a helical membrane-spanning segment.

This sequence belongs to the DsbB family. BdbC subfamily.

The protein localises to the cell inner membrane. In terms of biological role, required for disulfide bond formation in some proteins. The chain is Probable disulfide formation protein from Chlamydia trachomatis serovar D (strain ATCC VR-885 / DSM 19411 / UW-3/Cx).